The primary structure comprises 561 residues: Urocanate hydratase (561 aa).

NAD(+) is bound by residues 52-53 (GG), Gln130, 176-178 (GMG), Glu196, Arg201, 242-243 (NA), 263-267 (QTSAH), 273-274 (YL), and Tyr322. Residue Cys410 is part of the active site. Gly492 is a binding site for NAD(+).

Belongs to the urocanase family. The cofactor is NAD(+).

The protein localises to the cytoplasm. The enzyme catalyses 4-imidazolone-5-propanoate = trans-urocanate + H2O. It functions in the pathway amino-acid degradation; L-histidine degradation into L-glutamate; N-formimidoyl-L-glutamate from L-histidine: step 2/3. Catalyzes the conversion of urocanate to 4-imidazolone-5-propionate. This is Urocanate hydratase from Salmonella choleraesuis (strain SC-B67).